Reading from the N-terminus, the 188-residue chain is UPF0397 protein LACR_0367 (188 aa).

5 consecutive transmembrane segments (helical) span residues 14–34, 48–68, 80–100, 120–140, and 152–172; these read IVVATGIGAALFVIIGWLINI, AVLALFSALFGPLAGFLIGFI, APWWTWVLGSGLMGLFLGFGV, IVQFLANVVVWGLIAPIGDIL, and QGVVAGLVNALTIAVAGTLLL.

It belongs to the UPF0397 family.

It is found in the cell membrane. The chain is UPF0397 protein LACR_0367 from Lactococcus lactis subsp. cremoris (strain SK11).